Consider the following 284-residue polypeptide: 2-dehydro-3-deoxyphosphooctonate aldolase (284 aa).

This sequence belongs to the KdsA family.

It is found in the cytoplasm. The enzyme catalyses D-arabinose 5-phosphate + phosphoenolpyruvate + H2O = 3-deoxy-alpha-D-manno-2-octulosonate-8-phosphate + phosphate. The protein operates within carbohydrate biosynthesis; 3-deoxy-D-manno-octulosonate biosynthesis; 3-deoxy-D-manno-octulosonate from D-ribulose 5-phosphate: step 2/3. It participates in bacterial outer membrane biogenesis; lipopolysaccharide biosynthesis. This chain is 2-dehydro-3-deoxyphosphooctonate aldolase, found in Escherichia coli O157:H7.